We begin with the raw amino-acid sequence, 85 residues long: Protein 19.2 (85 aa).

This is Protein 19.2 from Escherichia coli (Bacteriophage T7).